A 622-amino-acid polypeptide reads, in one-letter code: Polypeptide N-acetylgalactosaminyltransferase 6 (622 aa).

At 1-8 the chain is on the cytoplasmic side; the sequence is MRLLRRRH. A helical; Signal-anchor for type II membrane protein membrane pass occupies residues 9–28; that stretch reads MPLRLAMVGCAFVLFLFLLH. The Lumenal segment spans residues 29 to 622; that stretch reads RDVSSREEAT…SDPHQLWLFV (594 aa). Asparagine 86 carries N-linked (GlcNAc...) asparagine glycosylation. Disulfide bonds link cysteine 165-cysteine 402 and cysteine 393-cysteine 474. Residues 176-285 form a catalytic subdomain A region; that stretch reads LATTSVIIVF…HGWLEPLLAR (110 aa). Positions 269, 271, and 407 each coordinate Mn(2+). Residues 348 to 410 form a catalytic subdomain B region; it reads PIKSPTFAGG…PCSVVGHVFR (63 aa). Asparagine 476 carries an N-linked (GlcNAc...) asparagine glycan. A Ricin B-type lectin domain is found at 506–622; it reads TNQCLDVGEN…SDPHQLWLFV (117 aa). The cysteines at positions 509 and 527 are disulfide-linked. UDP-N-acetyl-alpha-D-galactosamine is bound by residues aspartate 511, glutamate 514, histidine 528, and asparagine 533. Intrachain disulfides connect cysteine 553/cysteine 566 and cysteine 597/cysteine 610.

The protein belongs to the glycosyltransferase 2 family. GalNAc-T subfamily. Requires Mn(2+) as cofactor. In terms of tissue distribution, expressed in placenta and trachea. Weakly expressed in brain and pancreas. Expressed in fibroblast. Weakly or not expressed in lung, liver, muscle, kidney, spleen, thymus, prostate, testis, ovary, intestine, colon, leukocyte, stomach, thyroid, spinal cord, lymph node, trachea, adrenal gland and bone marrow.

Its subcellular location is the golgi apparatus membrane. The enzyme catalyses L-seryl-[protein] + UDP-N-acetyl-alpha-D-galactosamine = a 3-O-[N-acetyl-alpha-D-galactosaminyl]-L-seryl-[protein] + UDP + H(+). It carries out the reaction L-threonyl-[protein] + UDP-N-acetyl-alpha-D-galactosamine = a 3-O-[N-acetyl-alpha-D-galactosaminyl]-L-threonyl-[protein] + UDP + H(+). Its pathway is protein modification; protein glycosylation. Catalyzes the initial reaction in O-linked oligosaccharide biosynthesis, the transfer of an N-acetyl-D-galactosamine residue to a serine or threonine residue on the protein receptor. May participate in synthesis of oncofetal fibronectin. Has activity toward MUC1A, MUC2, EA2 and fibronectin peptides. Glycosylates FGF23. The sequence is that of Polypeptide N-acetylgalactosaminyltransferase 6 (GALNT6) from Homo sapiens (Human).